The sequence spans 509 residues: Lysine--tRNA ligase (509 aa).

Glu-395 and Glu-402 together coordinate Mg(2+).

It belongs to the class-II aminoacyl-tRNA synthetase family. In terms of assembly, homodimer. Mg(2+) serves as cofactor.

Its subcellular location is the cytoplasm. The enzyme catalyses tRNA(Lys) + L-lysine + ATP = L-lysyl-tRNA(Lys) + AMP + diphosphate. This Fervidobacterium nodosum (strain ATCC 35602 / DSM 5306 / Rt17-B1) protein is Lysine--tRNA ligase.